Here is a 508-residue protein sequence, read N- to C-terminus: Protection of telomeres protein tpz1 (508 aa).

The interval 2–223 is pot1-binding; sequence SNCLKHPWLE…ENTTHGIYLE (222 aa). 3 disordered regions span residues 159 to 178, 235 to 269, and 282 to 358; these read QEAS…NSRD, VSET…PSLP, and PPPF…QSHR. The span at 327-347 shows a compositional bias: polar residues; the sequence is STEQLNSSLTIERSQSIQSTD. The span at 348–358 shows a compositional bias: basic and acidic residues; sequence SKQRVETQSHR. Residues 379-508 form a ccq1/poz1-binding region; sequence TIDDSTGKLL…KKIEEFRNKS (130 aa).

In terms of assembly, interacts with ccq1, pot1 and poz1.

It localises to the chromosome. The protein localises to the telomere. Its subcellular location is the nucleus. In terms of biological role, telomeric DNA-binding protein that is required to protect the 3'-end telomeric overhang and involved in telomere length regulation. recruits poz1 and ccq1 to telomeres, regulating telomere length negatively and positively respectively. The sequence is that of Protection of telomeres protein tpz1 (tpz1) from Schizosaccharomyces pombe (strain 972 / ATCC 24843) (Fission yeast).